Consider the following 942-residue polypeptide: Protein inturned (942 aa).

Residues 1–13 (MADPARRDPRGRA) show a composition bias toward basic and acidic residues. Disordered regions lie at residues 1-54 (MADP…LEPE) and 129-150 (PKRH…KHQS). Residues 22–32 (SQEEEEEESDS) are compositionally biased toward acidic residues. Residues 33–48 (DAGASSLGSCSSASSD) show a composition bias toward low complexity. Residues 138 to 150 (SNTGPVSILKHQS) show a composition bias toward polar residues. A PDZ domain is found at 189 to 267 (LVGVIHQTKW…PMQVKLTFEN (79 aa)). Ser674 and Ser678 each carry phosphoserine. The tract at residues 707 to 752 (KARKPSPSRIGGGREPGEGEENVGLSPHTTPDTVRKQRESEGSDDN) is disordered.

It belongs to the inturned family. Component of the CPLANE (ciliogenesis and planar polarity effectors) complex, composed of INTU, FUZ and WDPCP. Interacts with CPLANE1. Interacts with NPHP4 and DAAM1; INTU is mediating the interaction between NPHP4 and DAAM1.

Its subcellular location is the cytoplasm. The protein resides in the cell surface. It localises to the cytoskeleton. It is found in the cilium basal body. The protein localises to the microtubule organizing center. Its subcellular location is the centrosome. The protein resides in the centriole. Its function is as follows. Plays a key role in ciliogenesis and embryonic development. Regulator of cilia formation by controlling the organization of the apical actin cytoskeleton and the positioning of the basal bodies at the apical cell surface, which in turn is essential for the normal orientation of elongating ciliary microtubules. Plays a key role in definition of cell polarity via its role in ciliogenesis but not via conversion extension. Has an indirect effect on hedgehog signaling. Proposed to function as core component of the CPLANE (ciliogenesis and planar polarity effectors) complex involved in the recruitment of peripheral IFT-A proteins to basal bodies. Required for recruitment of CPLANE2 to the mother centriole. Binds phosphatidylinositol 3-phosphate with highest affinity, followed by phosphatidylinositol 4-phosphate and phosphatidylinositol 5-phosphate. In Rattus norvegicus (Rat), this protein is Protein inturned (Intu).